A 97-amino-acid chain; its full sequence is Sorbitol dehydrogenase (97 aa).

C44 is a Zn(2+) binding site. Y50 serves as a coordination point for substrate. Zn(2+)-binding residues include H69 and E70.

It belongs to the zinc-containing alcohol dehydrogenase family. In terms of assembly, homotetramer. Requires Zn(2+) as cofactor.

It is found in the mitochondrion membrane. Its subcellular location is the cell projection. It localises to the cilium. The protein resides in the flagellum. The enzyme catalyses xylitol + NAD(+) = D-xylulose + NADH + H(+). It carries out the reaction L-iditol + NAD(+) = keto-L-sorbose + NADH + H(+). It catalyses the reaction keto-D-fructose + NADH + H(+) = D-sorbitol + NAD(+). Its function is as follows. Polyol dehydrogenase that catalyzes the reversible NAD(+)-dependent oxidation of various sugar alcohols. Is active with xylitol, L-iditol and D-sorbitol (D-glucitol) as substrates, leading to the C2-oxidized products D-xylulose, L-sorbose and D-fructose, respectively. Is a key enzyme in the polyol pathway that interconverts glucose and fructose via sorbitol, which constitutes an important alternate route for glucose metabolism. May play a role in sperm motility by using sorbitol as an alternative energy source for sperm motility. The protein is Sorbitol dehydrogenase (SORD) of Sus scrofa (Pig).